A 165-amino-acid polypeptide reads, in one-letter code: Phosphopantetheine adenylyltransferase (165 aa).

Ser9 lines the substrate pocket. Residues 9 to 10 and His17 each bind ATP; that span reads SF. Substrate is bound by residues Lys41, Leu73, and Lys87. ATP contacts are provided by residues 88–90, Glu98, and 122–128; these read GLR and YSFLSSS.

Belongs to the bacterial CoaD family. As to quaternary structure, homohexamer. Requires Mg(2+) as cofactor.

The protein localises to the cytoplasm. It catalyses the reaction (R)-4'-phosphopantetheine + ATP + H(+) = 3'-dephospho-CoA + diphosphate. It functions in the pathway cofactor biosynthesis; coenzyme A biosynthesis; CoA from (R)-pantothenate: step 4/5. Its function is as follows. Reversibly transfers an adenylyl group from ATP to 4'-phosphopantetheine, yielding dephospho-CoA (dPCoA) and pyrophosphate. This chain is Phosphopantetheine adenylyltransferase, found in Acidothermus cellulolyticus (strain ATCC 43068 / DSM 8971 / 11B).